Consider the following 74-residue polypeptide: U-actitoxin-Bgr3a (74 aa).

A signal peptide spans 1 to 21; the sequence is MSAQRFLFLLVVTSLIAASLA. Positions 22-29 are excised as a propeptide; that stretch reads APKDVQLT. 3 cysteine pairs are disulfide-bonded: Cys35/Cys68, Cys37/Cys61, and Cys51/Cys69.

It belongs to the sea anemone type 3 (BDS) potassium channel toxin family.

It is found in the secreted. The protein resides in the nematocyst. Its function is as follows. Potently and selectively inhibits voltage-gated potassium channels Kv11/KCNH/ERG. Acts as a gating-modifier toxin that shifts the voltage-dependence of ERG activation in the positive direction and suppresses its current amplitudes elicited by strong depolarizing pulses that maximally activate the channels. The polypeptide is U-actitoxin-Bgr3a (Bunodosoma granuliferum (Red warty sea anemone)).